A 293-amino-acid chain; its full sequence is Methylsterol monooxygenase 1 (293 aa).

2 helical membrane-spanning segments follow: residues 55–75 (LIVHETIYFLFSLPGFLFQFI) and 100–120 (GILFNHFFIQLPLICGTYYFT). Positions 144–274 (GCAVIEDTWH…FTWWDRIFGT (131 aa)) constitute a Fatty acid hydroxylase domain. The short motif at 157 to 161 (HRLLH) is the Histidine box-1 element. Residues 170–174 (HKVHH) carry the Histidine box-2 motif. Residues 199-219 (FFIGIVLLCDHVILLWAWVTM) form a helical membrane-spanning segment. The short motif at 249–255 (HHDFHHM) is the Histidine box-3 element.

Belongs to the sterol desaturase family. Fe cation serves as cofactor. In terms of processing, ubiquitinated by MARCHF6, leading to proteasomal degradation.

It is found in the endoplasmic reticulum membrane. It carries out the reaction 4,4-dimethyl-5alpha-cholest-7-en-3beta-ol + 6 Fe(II)-[cytochrome b5] + 3 O2 + 5 H(+) = 4alpha-carboxy-4beta-methyl-5alpha-cholest-7-ene-3beta-ol + 6 Fe(III)-[cytochrome b5] + 4 H2O. The enzyme catalyses 4,4-dimethyl-5alpha-cholesta-8,24-dien-3beta-ol + 6 Fe(II)-[cytochrome b5] + 3 O2 + 5 H(+) = 4beta-methylzymosterol-4alpha-carboxylate + 6 Fe(III)-[cytochrome b5] + 4 H2O. The catalysed reaction is 4alpha-methylzymosterol + 6 Fe(II)-[cytochrome b5] + 3 O2 + 5 H(+) = 4alpha-carboxyzymosterol + 6 Fe(III)-[cytochrome b5] + 4 H2O. It catalyses the reaction 4alpha-methyl-5alpha-cholest-7-en-3beta-ol + 6 Fe(II)-[cytochrome b5] + 3 O2 + 5 H(+) = 4alpha-carboxy-5alpha-cholest-7-en-3beta-ol + 6 Fe(III)-[cytochrome b5] + 4 H2O. It carries out the reaction 4,4-dimethyl-5alpha-cholest-8-en-3beta-ol + 6 Fe(II)-[cytochrome b5] + 3 O2 + 5 H(+) = 4alpha-carboxy-4beta-methyl-5alpha-cholest-8-en-3beta-ol + 6 Fe(III)-[cytochrome b5] + 4 H2O. The enzyme catalyses 4alpha-methyl-5alpha-cholest-8-en-3beta-ol + 6 Fe(II)-[cytochrome b5] + 3 O2 + 5 H(+) = 4alpha-carboxy-5alpha-cholest-8-ene-3beta-ol + 6 Fe(III)-[cytochrome b5] + 4 H2O. The protein operates within steroid biosynthesis; zymosterol biosynthesis; zymosterol from lanosterol: step 3/6. It participates in steroid biosynthesis; cholesterol biosynthesis. Catalyzes the three-step monooxygenation required for the demethylation of 4,4-dimethyl and 4alpha-methylsterols, which can be subsequently metabolized to cholesterol. This is Methylsterol monooxygenase 1 (Msmo1) from Rattus norvegicus (Rat).